The sequence spans 317 residues: High-affinity zinc uptake system protein ZnuA (317 aa).

The signal sequence occupies residues 1–31; sequence MNINIMLKNKKKKFFSILAILFILMPNNSYA. Cysteine 259 and cysteine 313 are joined by a disulfide.

The protein belongs to the bacterial solute-binding protein 9 family.

The protein resides in the periplasm. Its function is as follows. Part of the ATP-binding cassette (ABC) transport system ZnuABC involved in zinc import. Binds zinc with high affinity and specificity and delivers it to the membrane permease for translocation into the cytoplasm. This is High-affinity zinc uptake system protein ZnuA (znuA) from Buchnera aphidicola subsp. Schizaphis graminum (strain Sg).